Here is a 338-residue protein sequence, read N- to C-terminus: Methionine synthase (338 aa).

Positions 210, 212, 234, and 294 each coordinate Zn(2+).

This sequence belongs to the archaeal MetE family. Zn(2+) serves as cofactor.

Its pathway is amino-acid biosynthesis; L-methionine biosynthesis via de novo pathway. Catalyzes the transfer of a methyl group to L-homocysteine resulting in methionine formation. The physiological methyl donor is unknown. This chain is Methionine synthase, found in Pyrococcus horikoshii (strain ATCC 700860 / DSM 12428 / JCM 9974 / NBRC 100139 / OT-3).